Reading from the N-terminus, the 279-residue chain is Proteasome subunit beta 2 (279 aa).

A propeptide spans 1-53 (removed in mature form; by autocatalysis); it reads MAAAFDPSGRFPDLFTSVGTSSFSAFLSKAAPELLPGRRPLPPGMATGLTPHA. Catalysis depends on threonine 54, which acts as the Nucleophile.

The protein belongs to the peptidase T1B family. In terms of assembly, the 20S proteasome core is composed of 14 alpha and 14 beta subunits that assemble into four stacked heptameric rings, resulting in a barrel-shaped structure. The two inner rings, each composed of seven catalytic beta subunits, are sandwiched by two outer rings, each composed of seven alpha subunits. The catalytic chamber with the active sites is on the inside of the barrel. Has a gated structure, the ends of the cylinder being occluded by the N-termini of the alpha-subunits. Is capped by the proteasome-associated ATPase, ARC.

The protein resides in the cytoplasm. It carries out the reaction Cleavage of peptide bonds with very broad specificity.. It functions in the pathway protein degradation; proteasomal Pup-dependent pathway. Its activity is regulated as follows. The formation of the proteasomal ATPase ARC-20S proteasome complex, likely via the docking of the C-termini of ARC into the intersubunit pockets in the alpha-rings, may trigger opening of the gate for substrate entry. Interconversion between the open-gate and close-gate conformations leads to a dynamic regulation of the 20S proteasome proteolysis activity. Its function is as follows. Component of the proteasome core, a large protease complex with broad specificity involved in protein degradation. This chain is Proteasome subunit beta 2, found in Salinispora tropica (strain ATCC BAA-916 / DSM 44818 / JCM 13857 / NBRC 105044 / CNB-440).